Consider the following 162-residue polypeptide: Putative auxin-responsive protein IAA28 (162 aa).

Residues 23 to 118 (SRFVKVFMHG…TVKRIYIVPA (96 aa)) form the PB1 domain. The segment at 122–141 (NESEYQEEEEDNAAAAATAD) is disordered.

The protein belongs to the Aux/IAA family. Homodimers and heterodimers.

Its subcellular location is the nucleus. Aux/IAA proteins are short-lived transcriptional factors that function as repressors of early auxin response genes at low auxin concentrations. This chain is Putative auxin-responsive protein IAA28 (IAA28), found in Oryza sativa subsp. japonica (Rice).